Consider the following 182-residue polypeptide: Isopentenyl-diphosphate Delta-isomerase (182 aa).

2 residues coordinate Mn(2+): H25 and H32. The Nudix hydrolase domain maps to 30 to 164 (LLHLAFSSWL…PWAFSPWMVM (135 aa)). C67 is an active-site residue. H69 is a binding site for Mn(2+). Position 87 (E87) interacts with Mg(2+). 2 residues coordinate Mn(2+): E114 and E116. Residue E116 is part of the active site.

Belongs to the IPP isomerase type 1 family. As to quaternary structure, homodimer. Mg(2+) is required as a cofactor. Requires Mn(2+) as cofactor.

The protein resides in the cytoplasm. The enzyme catalyses isopentenyl diphosphate = dimethylallyl diphosphate. Its pathway is isoprenoid biosynthesis; dimethylallyl diphosphate biosynthesis; dimethylallyl diphosphate from isopentenyl diphosphate: step 1/1. Functionally, catalyzes the 1,3-allylic rearrangement of the homoallylic substrate isopentenyl (IPP) to its highly electrophilic allylic isomer, dimethylallyl diphosphate (DMAPP). This is Isopentenyl-diphosphate Delta-isomerase from Shigella flexneri serotype 5b (strain 8401).